A 197-amino-acid polypeptide reads, in one-letter code: Transposon Tn552 resolvase (197 aa).

Residues 1-136 form the Resolvase/invertase-type recombinase catalytic domain; it reads MKIGYARVST…AGRIAARARG (136 aa). The active-site O-(5'-phospho-DNA)-serine intermediate is Ser9. Positions 163–182 form a DNA-binding region, H-T-H motif; the sequence is IKTIAEQWQVSRTTIYRYLN.

This sequence belongs to the site-specific recombinase resolvase family.

Its function is as follows. Resolvase catalyzes the resolution (a site-specific recombination) of the cointegrated replicon to yield the final transposition products. The protein is Transposon Tn552 resolvase (tnpR) of Staphylococcus aureus.